The following is a 475-amino-acid chain: Ribulose bisphosphate carboxylase large chain (475 aa).

Residues 1–2 constitute a propeptide that is removed on maturation; the sequence is MS. Pro3 is subject to N-acetylproline. N6,N6,N6-trimethyllysine is present on Lys14. Residues Asn123 and Thr173 each contribute to the substrate site. Lys175 serves as the catalytic Proton acceptor. Lys177 lines the substrate pocket. Mg(2+) contacts are provided by Lys201, Asp203, and Glu204. Lys201 carries the N6-carboxylysine modification. The active-site Proton acceptor is the His294. Substrate-binding residues include Arg295, His327, and Ser379.

It belongs to the RuBisCO large chain family. Type I subfamily. In terms of assembly, heterohexadecamer of 8 large chains and 8 small chains; disulfide-linked. The disulfide link is formed within the large subunit homodimers. The cofactor is Mg(2+). In terms of processing, the disulfide bond which can form in the large chain dimeric partners within the hexadecamer appears to be associated with oxidative stress and protein turnover.

It localises to the plastid. Its subcellular location is the chloroplast. It catalyses the reaction 2 (2R)-3-phosphoglycerate + 2 H(+) = D-ribulose 1,5-bisphosphate + CO2 + H2O. It carries out the reaction D-ribulose 1,5-bisphosphate + O2 = 2-phosphoglycolate + (2R)-3-phosphoglycerate + 2 H(+). RuBisCO catalyzes two reactions: the carboxylation of D-ribulose 1,5-bisphosphate, the primary event in carbon dioxide fixation, as well as the oxidative fragmentation of the pentose substrate in the photorespiration process. Both reactions occur simultaneously and in competition at the same active site. This chain is Ribulose bisphosphate carboxylase large chain (rbcL), found in Cucumis sativus (Cucumber).